Here is a 458-residue protein sequence, read N- to C-terminus: ATP synthase subunit beta (458 aa).

Residue 148–155 coordinates ATP; it reads GGAGVGKT.

This sequence belongs to the ATPase alpha/beta chains family. F-type ATPases have 2 components, CF(1) - the catalytic core - and CF(0) - the membrane proton channel. CF(1) has five subunits: alpha(3), beta(3), gamma(1), delta(1), epsilon(1). CF(0) has three main subunits: a(1), b(2) and c(9-12). The alpha and beta chains form an alternating ring which encloses part of the gamma chain. CF(1) is attached to CF(0) by a central stalk formed by the gamma and epsilon chains, while a peripheral stalk is formed by the delta and b chains.

The protein resides in the cell inner membrane. It carries out the reaction ATP + H2O + 4 H(+)(in) = ADP + phosphate + 5 H(+)(out). In terms of biological role, produces ATP from ADP in the presence of a proton gradient across the membrane. The catalytic sites are hosted primarily by the beta subunits. The chain is ATP synthase subunit beta from Nitrosococcus oceani (strain ATCC 19707 / BCRC 17464 / JCM 30415 / NCIMB 11848 / C-107).